The primary structure comprises 107 residues: Nitrogenase-stabilizing/protective protein NifW (107 aa).

This sequence belongs to the NifW family. In terms of assembly, homotrimer; associates with NifD.

May protect the nitrogenase Fe-Mo protein from oxidative damage. The chain is Nitrogenase-stabilizing/protective protein NifW from Gloeothece citriformis (strain PCC 7424) (Cyanothece sp. (strain PCC 7424)).